We begin with the raw amino-acid sequence, 528 residues long: Peptide chain release factor 3 (528 aa).

The tr-type G domain occupies 11 to 279; sequence SDRRTFAIIS…GFVEWAPAPI (269 aa). Residues 20 to 27, 88 to 92, and 142 to 145 contribute to the GTP site; these read SHPDAGKT, DTPGH, and NKMD.

This sequence belongs to the TRAFAC class translation factor GTPase superfamily. Classic translation factor GTPase family. PrfC subfamily.

It localises to the cytoplasm. Increases the formation of ribosomal termination complexes and stimulates activities of RF-1 and RF-2. It binds guanine nucleotides and has strong preference for UGA stop codons. It may interact directly with the ribosome. The stimulation of RF-1 and RF-2 is significantly reduced by GTP and GDP, but not by GMP. The polypeptide is Peptide chain release factor 3 (Marinomonas sp. (strain MWYL1)).